The sequence spans 502 residues: Cytochrome P450 3A5 (502 aa).

A heme-binding site is contributed by C441.

Belongs to the cytochrome P450 family. Heme serves as cofactor.

Its subcellular location is the endoplasmic reticulum membrane. It is found in the microsome membrane. The catalysed reaction is an organic molecule + reduced [NADPH--hemoprotein reductase] + O2 = an alcohol + oxidized [NADPH--hemoprotein reductase] + H2O + H(+). It catalyses the reaction 17beta-estradiol + reduced [NADPH--hemoprotein reductase] + O2 = 2-hydroxy-17beta-estradiol + oxidized [NADPH--hemoprotein reductase] + H2O + H(+). The enzyme catalyses 17beta-estradiol + reduced [NADPH--hemoprotein reductase] + O2 = 4-hydroxy-17beta-estradiol + oxidized [NADPH--hemoprotein reductase] + H2O + H(+). It carries out the reaction estrone + reduced [NADPH--hemoprotein reductase] + O2 = 2-hydroxyestrone + oxidized [NADPH--hemoprotein reductase] + H2O + H(+). The catalysed reaction is estrone + reduced [NADPH--hemoprotein reductase] + O2 = 4-hydroxyestrone + oxidized [NADPH--hemoprotein reductase] + H2O + H(+). It catalyses the reaction testosterone + reduced [NADPH--hemoprotein reductase] + O2 = 6beta,17beta-dihydroxyandrost-4-en-3-one + oxidized [NADPH--hemoprotein reductase] + H2O + H(+). The enzyme catalyses androst-4-ene-3,17-dione + reduced [NADPH--hemoprotein reductase] + O2 = 6beta-hydroxyandrost-4-ene-3,17-dione + oxidized [NADPH--hemoprotein reductase] + H2O + H(+). It carries out the reaction progesterone + reduced [NADPH--hemoprotein reductase] + O2 = 6beta-hydroxyprogesterone + oxidized [NADPH--hemoprotein reductase] + H2O + H(+). The catalysed reaction is all-trans-retinol + reduced [NADPH--hemoprotein reductase] + O2 = all-trans-retinal + oxidized [NADPH--hemoprotein reductase] + 2 H2O + H(+). It catalyses the reaction all-trans-retinoate + reduced [NADPH--hemoprotein reductase] + O2 = all-trans-4-hydroxyretinoate + oxidized [NADPH--hemoprotein reductase] + H2O + H(+). It functions in the pathway steroid hormone biosynthesis. The protein operates within cofactor metabolism; retinol metabolism. A cytochrome P450 monooxygenase involved in the metabolism of steroid hormones and vitamins. Mechanistically, uses molecular oxygen inserting one oxygen atom into a substrate, and reducing the second into a water molecule, with two electrons provided by NADPH via cytochrome P450 reductase (NADPH--hemoprotein reductase). Catalyzes the hydroxylation of carbon-hydrogen bonds. Exhibits high catalytic activity for the formation of catechol estrogens from 17beta-estradiol (E2) and estrone (E1), namely 2-hydroxy E1 and E2. Catalyzes 6beta-hydroxylation of the steroid hormones testosterone, progesterone, and androstenedione. Catalyzes the oxidative conversion of all-trans-retinol to all-trans-retinal, a rate-limiting step for the biosynthesis of all-trans-retinoic acid (atRA). Further metabolizes all trans-retinoic acid (atRA) to 4-hydroxyretinoate and may play a role in hepatic atRA clearance. Also involved in the oxidative metabolism of xenobiotics, including calcium channel blocking drug nifedipine and immunosuppressive drug cyclosporine. The sequence is that of Cytochrome P450 3A5 from Homo sapiens (Human).